Here is a 258-residue protein sequence, read N- to C-terminus: MLLLVDAGNTRIKWVLVDCSSGQQTPGSWHVAGSAARAETAQLAQAWSSFSISRVLLSNVAGAELREELERAVLHAAGDIELEWFASTPAAGGVRNHYLNPAQLGSDRFAAAIGAHVLFPNRPLVVATCGTATTIDAVNADGAFVGGMILPGLALMASALANNTAQLPEVALHASSTQPFADNTDAAIVSGCLAAQAGAIERAVKAHAAAHPQGELYCILAGGAADLIAPHLSIAYKRVDNLVLIGLHTVAIHTLPTC.

Asp-6–Lys-13 contributes to the ATP binding site. Substrate-binding positions include Tyr-98 and Gly-105–Arg-108. Asp-107 functions as the Proton acceptor in the catalytic mechanism. Thr-131 is an ATP binding site. Residue Thr-184 coordinates substrate.

The protein belongs to the type III pantothenate kinase family. As to quaternary structure, homodimer. It depends on NH4(+) as a cofactor. K(+) is required as a cofactor.

The protein resides in the cytoplasm. The enzyme catalyses (R)-pantothenate + ATP = (R)-4'-phosphopantothenate + ADP + H(+). It participates in cofactor biosynthesis; coenzyme A biosynthesis; CoA from (R)-pantothenate: step 1/5. Catalyzes the phosphorylation of pantothenate (Pan), the first step in CoA biosynthesis. The polypeptide is Type III pantothenate kinase (Herminiimonas arsenicoxydans).